Reading from the N-terminus, the 253-residue chain is Triosephosphate isomerase, cytosolic (253 aa).

Substrate contacts are provided by Asn10 and Lys12. Catalysis depends on His96, which acts as the Electrophile. The active-site Proton acceptor is Glu166.

Belongs to the triosephosphate isomerase family. In terms of assembly, homodimer.

The protein localises to the cytoplasm. It carries out the reaction D-glyceraldehyde 3-phosphate = dihydroxyacetone phosphate. The protein operates within carbohydrate biosynthesis; gluconeogenesis. It functions in the pathway carbohydrate degradation; glycolysis; D-glyceraldehyde 3-phosphate from glycerone phosphate: step 1/1. The sequence is that of Triosephosphate isomerase, cytosolic from Coptis japonica (Japanese goldthread).